A 637-amino-acid polypeptide reads, in one-letter code: Early transcription factor 70 kDa subunit (637 aa).

The Helicase ATP-binding domain occupies 32–185; the sequence is RTIIDENRSV…GHIIDLMSEE (154 aa). Position 45–52 (45–52) interacts with ATP; sequence HIMGSGKT. The short motif at 135 to 138 is the DEXH box element; it reads DEAH. The 181-residue stretch at 327-507 folds into the Helicase C-terminal domain; it reads KFKYFINRIQ…VLPFDIKKLL (181 aa).

Belongs to the helicase family. VETF subfamily. In terms of assembly, heterodimer of a 70 kDa and a 82 kDa subunit. Part of the early transcription complex composed of ETF, RAP94/OPG109, and the DNA-directed RNA polymerase.

Its subcellular location is the virion. Its function is as follows. Acts with RNA polymerase to initiate transcription from early gene promoters. Is recruited by the RPO-associated protein of 94 kDa RAP94/OPG109 to form the early transcription complex, which also contains the core RNA polymerase. ETF heterodimer binds to early gene promoters. The chain is Early transcription factor 70 kDa subunit (OPG118) from Homo sapiens (Human).